Consider the following 212-residue polypeptide: Transcriptional repressor CcpN (212 aa).

The HTH deoR-type domain occupies 6–70 (LNKRQEHILQ…FYTGKTGTQL (65 aa)). Residues 23 to 42 (ITGEHIAEKLNLTRATLRPD) constitute a DNA-binding region (H-T-H motif). CBS domains follow at residues 83-139 (FQSI…QQEL) and 148-211 (MTRM…ENEI).

Functionally, transcription repressor that binds to the promoter of gapB and pckA genes, preventing their expression. Acts as a regulator for catabolite repression of gluconeogenic genes. The polypeptide is Transcriptional repressor CcpN (ccpN) (Bacillus subtilis (strain 168)).